Here is a 91-residue protein sequence, read N- to C-terminus: Small ribosomal subunit protein bS16 (91 aa).

It belongs to the bacterial ribosomal protein bS16 family.

The protein is Small ribosomal subunit protein bS16 of Staphylococcus epidermidis (strain ATCC 35984 / DSM 28319 / BCRC 17069 / CCUG 31568 / BM 3577 / RP62A).